Here is a 292-residue protein sequence, read N- to C-terminus: ATP-dependent Clp protease proteolytic subunit 4, chloroplastic (292 aa).

The N-terminal 65 residues, M1–M65, are a transit peptide targeting the chloroplast. S66 carries the N-acetylserine modification. The active-site Nucleophile is S158. H183 is a catalytic residue.

This sequence belongs to the peptidase S14 family. As to quaternary structure, component of the chloroplastic Clp protease core complex which consist of at least 16 proteins: CLPP4 (3 copies), CLPP5 (3 copies), CLPR4 (2 copies), ClpP1 (1 copy), CLPP6 (1 copy), CLPR2 (1 copy), CLPT1 (1 copy), CLPT2 (1 copy) and 3 copies of CLPP3 and/or CLPR1 and/or CLPR3. Interacts with CHIP. The core complex is organized in two heptameric rings, one containing CLPP3,4,5,6 in a 1:2:3:1 ratio and the other CLPP1 and CLPR1,2,3,4 in a 3:1:1:1:1 ratio. In terms of processing, ubiquitinated by CHIP. In terms of tissue distribution, mostly expressed in leaves. Also detected in stems, and to a lower extent, in roots (at protein level).

The protein resides in the plastid. It localises to the chloroplast stroma. The enzyme catalyses Hydrolysis of proteins to small peptides in the presence of ATP and magnesium. alpha-casein is the usual test substrate. In the absence of ATP, only oligopeptides shorter than five residues are hydrolyzed (such as succinyl-Leu-Tyr-|-NHMec, and Leu-Tyr-Leu-|-Tyr-Trp, in which cleavage of the -Tyr-|-Leu- and -Tyr-|-Trp bonds also occurs).. Cleaves peptides in various proteins in a process that requires ATP hydrolysis. Has a chymotrypsin-like activity. Plays a major role in the degradation of misfolded proteins. Essential protein required for chloroplast development and integrity. Essential for Embryogenesis. The chain is ATP-dependent Clp protease proteolytic subunit 4, chloroplastic from Arabidopsis thaliana (Mouse-ear cress).